A 180-amino-acid chain; its full sequence is O-acetyl-ADP-ribose deacetylase (180 aa).

The Macro domain occupies 1–175 (MKPQIEVVVG…LYQRLLIQRG (175 aa)). Substrate contacts are provided by residues 11–12 (DI), Asn25, 33–35 (GVD), and 122–126 (STGVY). Asp35 functions as the Proton acceptor in the catalytic mechanism.

It belongs to the MacroD-type family. YmdB subfamily. In terms of assembly, homodimer. Interacts with RNase III.

It catalyses the reaction 3''-O-acetyl-ADP-D-ribose + H2O = ADP-D-ribose + acetate + H(+). It carries out the reaction 2''-O-acetyl-ADP-D-ribose + H2O = ADP-D-ribose + acetate + H(+). Its function is as follows. Deacetylates O-acetyl-ADP ribose to yield ADP-ribose and free acetate. Down-regulates ribonuclease 3 (RNase III) activity. Acts by interacting directly with the region of the ribonuclease that is required for dimerization/activation. The chain is O-acetyl-ADP-ribose deacetylase from Enterobacter sp. (strain 638).